Here is a 240-residue protein sequence, read N- to C-terminus: uncharacterized protein (240 aa).

Residues 1-27 are disordered; sequence MKDLQKKSSVRRQITNEDDERYGEDSI. S59 and S95 each carry phosphoserine. The disordered stretch occupies residues 189–227; sequence RTPSPTGKSVGDEATSNNMHSSSAIRNPNGPTVDPEEGK. Residues 202 to 218 are compositionally biased toward polar residues; it reads ATSNNMHSSSAIRNPNG.

This is an uncharacterized protein from Saccharomyces cerevisiae (strain ATCC 204508 / S288c) (Baker's yeast).